The primary structure comprises 717 residues: DNA ligase (717 aa).

NAD(+) is bound by residues 44–48 (DADYD), 93–94 (SL), and Glu127. Lys129 functions as the N6-AMP-lysine intermediate in the catalytic mechanism. Arg150, Glu186, Lys302, and Lys326 together coordinate NAD(+). The Zn(2+) site is built by Cys431, Cys434, Cys455, and Cys461. Positions 639 to 717 (STDSPVAGKT…EDEWLALIGG (79 aa)) constitute a BRCT domain.

It belongs to the NAD-dependent DNA ligase family. LigA subfamily. It depends on Mg(2+) as a cofactor. Mn(2+) is required as a cofactor.

The enzyme catalyses NAD(+) + (deoxyribonucleotide)n-3'-hydroxyl + 5'-phospho-(deoxyribonucleotide)m = (deoxyribonucleotide)n+m + AMP + beta-nicotinamide D-nucleotide.. DNA ligase that catalyzes the formation of phosphodiester linkages between 5'-phosphoryl and 3'-hydroxyl groups in double-stranded DNA using NAD as a coenzyme and as the energy source for the reaction. It is essential for DNA replication and repair of damaged DNA. This Sinorhizobium fredii (strain NBRC 101917 / NGR234) protein is DNA ligase.